The primary structure comprises 317 residues: Acetyl-coenzyme A carboxylase carboxyl transferase subunit beta (317 aa).

Positions 1–28 (MANNMTDTMTKFDTNNDSASLQQNGNKA) are disordered. Residues 55–317 (PSTKCSSCHS…LCSVPNVDAQ (263 aa)) enclose the CoA carboxyltransferase N-terminal domain. Cys-59, Cys-62, Cys-78, and Cys-81 together coordinate Zn(2+). The C4-type zinc finger occupies 59-81 (CSSCHSVITNTALIFNCYVCPHC).

It belongs to the AccD/PCCB family. In terms of assembly, acetyl-CoA carboxylase is a heterohexamer composed of biotin carboxyl carrier protein (AccB), biotin carboxylase (AccC) and two subunits each of ACCase subunit alpha (AccA) and ACCase subunit beta (AccD). Requires Zn(2+) as cofactor.

Its subcellular location is the cytoplasm. It catalyses the reaction N(6)-carboxybiotinyl-L-lysyl-[protein] + acetyl-CoA = N(6)-biotinyl-L-lysyl-[protein] + malonyl-CoA. Its pathway is lipid metabolism; malonyl-CoA biosynthesis; malonyl-CoA from acetyl-CoA: step 1/1. Functionally, component of the acetyl coenzyme A carboxylase (ACC) complex. Biotin carboxylase (BC) catalyzes the carboxylation of biotin on its carrier protein (BCCP) and then the CO(2) group is transferred by the transcarboxylase to acetyl-CoA to form malonyl-CoA. The polypeptide is Acetyl-coenzyme A carboxylase carboxyl transferase subunit beta (Psychrobacter arcticus (strain DSM 17307 / VKM B-2377 / 273-4)).